We begin with the raw amino-acid sequence, 158 residues long: Protein Smg homolog (158 aa).

Belongs to the Smg family.

In Coxiella burnetii (strain Dugway 5J108-111), this protein is Protein Smg homolog.